A 313-amino-acid chain; its full sequence is Probable cell division protein WhiA (313 aa).

Positions 280 to 313 form a DNA-binding region, H-T-H motif; sequence SLKELGAMLNPPIGKSGVNHRLKKLCSIADGLRQ.

It belongs to the WhiA family.

In terms of biological role, involved in cell division and chromosome segregation. The protein is Probable cell division protein WhiA of Lachnoclostridium phytofermentans (strain ATCC 700394 / DSM 18823 / ISDg) (Clostridium phytofermentans).